The chain runs to 244 residues: tRNA pseudouridine synthase A 2 (244 aa).

Asp-52 functions as the Nucleophile in the catalytic mechanism. Substrate is bound at residue Tyr-110.

This sequence belongs to the tRNA pseudouridine synthase TruA family. In terms of assembly, homodimer.

It carries out the reaction uridine(38/39/40) in tRNA = pseudouridine(38/39/40) in tRNA. Its function is as follows. Formation of pseudouridine at positions 38, 39 and 40 in the anticodon stem and loop of transfer RNAs. This chain is tRNA pseudouridine synthase A 2, found in Clostridium perfringens (strain 13 / Type A).